Consider the following 503-residue polypeptide: Drimenol monooxygenase (503 aa).

Residues 7 to 23 (MICIVVSGLLLYSSRTS) traverse the membrane as a helical segment. Ser471 is a binding site for heme.

It belongs to the cytochrome P450 family. Heme serves as cofactor.

The protein resides in the membrane. The catalysed reaction is (5S,9S,10S)-drim-7-en-11-ol + reduced [NADPH--hemoprotein reductase] + O2 = (5S,10S)-(9R)-7-drimene-11,12-diol + oxidized [NADPH--hemoprotein reductase] + H2O + H(+). Its function is as follows. Catalyzes the conversion of drimenol to drimendiol, a precursor of the sesquiterpenoid polygodial. Polygodial has been shown to be an antifeedant for a number of herbivorous insects. This chain is Drimenol monooxygenase, found in Persicaria hydropiper (Marshpepper knotweed).